Consider the following 89-residue polypeptide: Elongation factor 1-beta (89 aa).

It belongs to the EF-1-beta/EF-1-delta family.

Its function is as follows. Promotes the exchange of GDP for GTP in EF-1-alpha/GDP, thus allowing the regeneration of EF-1-alpha/GTP that could then be used to form the ternary complex EF-1-alpha/GTP/AAtRNA. In Methanococcus maripaludis (strain DSM 14266 / JCM 13030 / NBRC 101832 / S2 / LL), this protein is Elongation factor 1-beta.